The chain runs to 41 residues: Large ribosomal subunit protein bL36 (41 aa).

It belongs to the bacterial ribosomal protein bL36 family.

This Rhodopseudomonas palustris (strain BisB18) protein is Large ribosomal subunit protein bL36.